We begin with the raw amino-acid sequence, 217 residues long: Ribosomal RNA small subunit methyltransferase G (217 aa).

S-adenosyl-L-methionine is bound by residues G76, F81, 128-129 (LE), and R142.

The protein belongs to the methyltransferase superfamily. RNA methyltransferase RsmG family.

It localises to the cytoplasm. It carries out the reaction guanosine(527) in 16S rRNA + S-adenosyl-L-methionine = N(7)-methylguanosine(527) in 16S rRNA + S-adenosyl-L-homocysteine. Functionally, specifically methylates the N7 position of guanine in position 527 of 16S rRNA. This chain is Ribosomal RNA small subunit methyltransferase G, found in Rhizorhabdus wittichii (strain DSM 6014 / CCUG 31198 / JCM 15750 / NBRC 105917 / EY 4224 / RW1) (Sphingomonas wittichii).